The primary structure comprises 244 residues: ATP synthase subunit a (244 aa).

The next 7 membrane-spanning stretches (helical) occupy residues 20–40, 81–101, 113–133, 140–160, 176–196, 202–222, and 223–243; these read FFDISITTITVYLGLLMVIVI, GILFFPFIMSLFLFVLTLNVM, QLLVTFTLAITIMIGITIWGF, FLNIFVPSGIEPWLLPLLVFI, LFANMLAGHLLIHIIGVAAIY, FIGILPWICVIAFMFLELGIA, and FLQAYVFVLLTLIYIANIINL.

Belongs to the ATPase A chain family. As to quaternary structure, F-type ATPases have 2 components, CF(1) - the catalytic core - and CF(0) - the membrane proton channel. CF(1) has five subunits: alpha(3), beta(3), gamma(1), delta(1), epsilon(1). CF(0) has three main subunits: a, b and c.

It is found in the mitochondrion inner membrane. Its function is as follows. Mitochondrial membrane ATP synthase (F(1)F(0) ATP synthase or Complex V) produces ATP from ADP in the presence of a proton gradient across the membrane which is generated by electron transport complexes of the respiratory chain. F-type ATPases consist of two structural domains, F(1) - containing the extramembraneous catalytic core and F(0) - containing the membrane proton channel, linked together by a central stalk and a peripheral stalk. During catalysis, ATP synthesis in the catalytic domain of F(1) is coupled via a rotary mechanism of the central stalk subunits to proton translocation. Key component of the proton channel; it may play a direct role in the translocation of protons across the membrane. The protein is ATP synthase subunit a (atp6) of Dictyostelium discoideum (Social amoeba).